The sequence spans 615 residues: UvrABC system protein C (615 aa).

Residues 14–91 form the GIY-YIG domain; that stretch reads TSPGCYIHKD…IKENKPKYNI (78 aa). Residues 196-231 form the UVR domain; the sequence is NKIIDELKGKMAAAAQTMEFERAAEYRDLIQAIGTL.

The protein belongs to the UvrC family. In terms of assembly, interacts with UvrB in an incision complex.

It localises to the cytoplasm. Its function is as follows. The UvrABC repair system catalyzes the recognition and processing of DNA lesions. UvrC both incises the 5' and 3' sides of the lesion. The N-terminal half is responsible for the 3' incision and the C-terminal half is responsible for the 5' incision. The protein is UvrABC system protein C of Streptococcus pneumoniae (strain ATCC 700669 / Spain 23F-1).